We begin with the raw amino-acid sequence, 85 residues long: Large ribosomal subunit protein bL27 (85 aa).

Residues 1–20 (MAHKKAGGSTRNGRDSEAKR) are disordered.

Belongs to the bacterial ribosomal protein bL27 family.

In Serratia proteamaculans (strain 568), this protein is Large ribosomal subunit protein bL27.